Here is a 265-residue protein sequence, read N- to C-terminus: Tryptophan synthase alpha chain (265 aa).

Catalysis depends on proton acceptor residues glutamate 48 and aspartate 59.

The protein belongs to the TrpA family. As to quaternary structure, tetramer of two alpha and two beta chains.

It carries out the reaction (1S,2R)-1-C-(indol-3-yl)glycerol 3-phosphate + L-serine = D-glyceraldehyde 3-phosphate + L-tryptophan + H2O. It functions in the pathway amino-acid biosynthesis; L-tryptophan biosynthesis; L-tryptophan from chorismate: step 5/5. The alpha subunit is responsible for the aldol cleavage of indoleglycerol phosphate to indole and glyceraldehyde 3-phosphate. In Ruthia magnifica subsp. Calyptogena magnifica, this protein is Tryptophan synthase alpha chain.